The following is a 145-amino-acid chain: Ribosomal RNA large subunit methyltransferase H (145 aa).

S-adenosyl-L-methionine contacts are provided by residues Leu64, Gly93, and 112-117; that span reads LSPLTF.

It belongs to the RNA methyltransferase RlmH family. Homodimer.

The protein localises to the cytoplasm. It catalyses the reaction pseudouridine(1915) in 23S rRNA + S-adenosyl-L-methionine = N(3)-methylpseudouridine(1915) in 23S rRNA + S-adenosyl-L-homocysteine + H(+). Functionally, specifically methylates the pseudouridine at position 1915 (m3Psi1915) in 23S rRNA. This Prochlorococcus marinus (strain NATL2A) protein is Ribosomal RNA large subunit methyltransferase H.